The following is a 362-amino-acid chain: P2Y purinoceptor 1 (362 aa).

Residues 1 to 40 (MTEALISAALNGTQPELLAGGWAAGNASTKCSLTKTGFQF) are Extracellular-facing. N-linked (GlcNAc...) asparagine glycans are attached at residues asparagine 11 and asparagine 26. 2 disulfide bridges follow: cysteine 31/cysteine 285 and cysteine 113/cysteine 191. An ADP-binding site is contributed by lysine 35. Residues 41–63 (YYLPTVYILVFITGFLGNSVAIW) form a helical membrane-spanning segment. At 64–76 (MFVFHMRPWSGIS) the chain is on the cytoplasmic side. A helical transmembrane segment spans residues 77–98 (VYMFNLALADFLYVLTLPALIF). The Extracellular portion of the chain corresponds to 99-114 (YYFNKTDWIFGDVMCK). N-linked (GlcNAc...) asparagine glycosylation is present at asparagine 102. Residues 115–136 (LQRFIFHVNLYGSILFLTCISV) form a helical membrane-spanning segment. Residues 137 to 155 (HRYTGVVHPLKSLGRLKKK) are Cytoplasmic-facing. Residues 156–177 (NAVYVSSLVWALVVAVIAPILF) form a helical membrane-spanning segment. Topologically, residues 178–203 (YSGTGVRRNKTITCYDTTADEYLRSY) are extracellular. An N-linked (GlcNAc...) asparagine glycan is attached at asparagine 186. 192-194 (YDT) is a binding site for ADP. A helical transmembrane segment spans residues 204-226 (FVYSMCTTVFMFCIPFIVILGCY). The Cytoplasmic segment spans residues 227–249 (GLIVKALIYKDLDNSPLRRKSIY). Residues 250 to 273 (LVIIVLTVFAVSYLPFHVMKTLNL) form a helical membrane-spanning segment. Residues 272-276 (NLRAR), 292-295 (YATY), and arginine 299 each bind ADP. The Extracellular portion of the chain corresponds to 274-292 (RARLDFQTPQMCAFNDKVY). A helical transmembrane segment spans residues 293-314 (ATYQVTRGLASLNSCVDPILYF). Over 315–362 (LAGDTFRRRLSRATRKSSRRSEPNVQSKSEEMTLNILTEYKQNGDTSL) the chain is Cytoplasmic.

It belongs to the G-protein coupled receptor 1 family. As to expression, mainly found in blood, brain, and lung. To a lesser extent in stomach, gut and skeletal muscle.

It is found in the cell membrane. Functionally, receptor for extracellular adenine nucleotides such as ADP. In platelets, binding to ADP leads to mobilization of intracellular calcium ions via activation of phospholipase C, a change in platelet shape, and ultimately platelet aggregation. This chain is P2Y purinoceptor 1 (P2RY1), found in Meleagris gallopavo (Wild turkey).